The sequence spans 141 residues: NADPH-dependent 7-cyano-7-deazaguanine reductase (141 aa).

Cys34 (thioimide intermediate) is an active-site residue. Residue Asp41 is the Proton donor of the active site. Residues 56–58 and 75–76 contribute to the substrate site; these read VEL and HE.

Belongs to the GTP cyclohydrolase I family. QueF type 1 subfamily.

It localises to the cytoplasm. It catalyses the reaction 7-aminomethyl-7-carbaguanine + 2 NADP(+) = 7-cyano-7-deazaguanine + 2 NADPH + 3 H(+). Its pathway is tRNA modification; tRNA-queuosine biosynthesis. Its function is as follows. Catalyzes the NADPH-dependent reduction of 7-cyano-7-deazaguanine (preQ0) to 7-aminomethyl-7-deazaguanine (preQ1). This Acidithiobacillus ferrooxidans (strain ATCC 23270 / DSM 14882 / CIP 104768 / NCIMB 8455) (Ferrobacillus ferrooxidans (strain ATCC 23270)) protein is NADPH-dependent 7-cyano-7-deazaguanine reductase.